A 532-amino-acid chain; its full sequence is CTP synthase (532 aa).

The interval 1–267 (MTKYIFVTGG…DDIVLEHLQL (267 aa)) is amidoligase domain. CTP is bound at residue Ser13. Ser13 is a UTP binding site. Residue 14 to 19 (SIGKGI) participates in ATP binding. Tyr54 lines the L-glutamine pocket. Asp71 contributes to the ATP binding site. Mg(2+)-binding residues include Asp71 and Glu141. CTP is bound by residues 148 to 150 (DIE), 188 to 193 (KTKPTQ), and Lys224. UTP-binding positions include 188–193 (KTKPTQ) and Lys224. A Glutamine amidotransferase type-1 domain is found at 292–532 (RIGLVGKYVS…DFVGAALNNK (241 aa)). Gly354 lines the L-glutamine pocket. The active-site Nucleophile; for glutamine hydrolysis is Cys381. L-glutamine contacts are provided by residues 382 to 385 (LGMQ), Glu405, and Arg462. Active-site residues include His507 and Glu509.

Belongs to the CTP synthase family. Homotetramer.

It carries out the reaction UTP + L-glutamine + ATP + H2O = CTP + L-glutamate + ADP + phosphate + 2 H(+). It catalyses the reaction L-glutamine + H2O = L-glutamate + NH4(+). The enzyme catalyses UTP + NH4(+) + ATP = CTP + ADP + phosphate + 2 H(+). It participates in pyrimidine metabolism; CTP biosynthesis via de novo pathway; CTP from UDP: step 2/2. With respect to regulation, allosterically activated by GTP, when glutamine is the substrate; GTP has no effect on the reaction when ammonia is the substrate. The allosteric effector GTP functions by stabilizing the protein conformation that binds the tetrahedral intermediate(s) formed during glutamine hydrolysis. Inhibited by the product CTP, via allosteric rather than competitive inhibition. Functionally, catalyzes the ATP-dependent amination of UTP to CTP with either L-glutamine or ammonia as the source of nitrogen. Regulates intracellular CTP levels through interactions with the four ribonucleotide triphosphates. The polypeptide is CTP synthase (Listeria innocua serovar 6a (strain ATCC BAA-680 / CLIP 11262)).